We begin with the raw amino-acid sequence, 334 residues long: Aspartate carbamoyltransferase catalytic subunit (334 aa).

Residues Arg70 and Thr71 each contribute to the carbamoyl phosphate site. Lys98 serves as a coordination point for L-aspartate. Positions 120, 150, and 153 each coordinate carbamoyl phosphate. Positions 183 and 239 each coordinate L-aspartate. Residues Gly280 and Pro281 each coordinate carbamoyl phosphate.

The protein belongs to the aspartate/ornithine carbamoyltransferase superfamily. ATCase family. Heterododecamer (2C3:3R2) of six catalytic PyrB chains organized as two trimers (C3), and six regulatory PyrI chains organized as three dimers (R2).

It catalyses the reaction carbamoyl phosphate + L-aspartate = N-carbamoyl-L-aspartate + phosphate + H(+). It participates in pyrimidine metabolism; UMP biosynthesis via de novo pathway; (S)-dihydroorotate from bicarbonate: step 2/3. Its function is as follows. Catalyzes the condensation of carbamoyl phosphate and aspartate to form carbamoyl aspartate and inorganic phosphate, the committed step in the de novo pyrimidine nucleotide biosynthesis pathway. This is Aspartate carbamoyltransferase catalytic subunit from Pseudomonas aeruginosa (strain LESB58).